Reading from the N-terminus, the 289-residue chain is Prepilin leader peptidase/N-methyltransferase (289 aa).

A helical membrane pass occupies residues 13-33 (AFVLCALVLGLLVGSFLNVVI). 4 residues coordinate Zn(2+): Cys72, Cys75, Cys97, and Cys100. 5 helical membrane-spanning segments follow: residues 128 to 148 (FSWQAGAMLLLTWGLLAMSMI), 159 to 179 (LVLPLLWLGLIINSFGLFASL), 183 to 203 (LWGAVVGYLALWSVYWLFKLV), 228 to 248 (VLPLTILLSSVVGAVLGTVML), and 256 to 276 (GTPIPFGPYLAIAGWVALLWG).

The protein belongs to the peptidase A24 family. Requires Zn(2+) as cofactor.

The protein localises to the cell inner membrane. It carries out the reaction Typically cleaves a -Gly-|-Phe- bond to release an N-terminal, basic peptide of 5-8 residues from type IV prepilin, and then N-methylates the new N-terminal amino group, the methyl donor being S-adenosyl-L-methionine.. In terms of biological role, plays an essential role in type IV pili and type II pseudopili formation by proteolytically removing the leader sequence from substrate proteins and subsequently monomethylating the alpha-amino group of the newly exposed N-terminal phenylalanine. The polypeptide is Prepilin leader peptidase/N-methyltransferase (pilD) (Stutzerimonas stutzeri (Pseudomonas stutzeri)).